A 727-amino-acid chain; its full sequence is Glycerol-3-phosphate dehydrogenase, mitochondrial (727 aa).

The transit peptide at 1–42 directs the protein to the mitochondrion; that stretch reads MAFQKAVKGTILVGGGALATVLGLSPFAHYRRKQVSLAYVEA. 71–99 contacts FAD; sequence DILVIGGGATGCGCALDAVTRGLKTALVE. Tyr601 bears the Phosphotyrosine mark. EF-hand domains follow at residues 623 to 658 and 659 to 694; these read SDID…INVQ and MDEN…VQKG. Positions 672, 674, 676, 678, and 683 each coordinate Ca(2+).

Belongs to the FAD-dependent glycerol-3-phosphate dehydrogenase family. FAD is required as a cofactor.

Its subcellular location is the mitochondrion inner membrane. It catalyses the reaction a quinone + sn-glycerol 3-phosphate = dihydroxyacetone phosphate + a quinol. The protein operates within polyol metabolism; glycerol degradation via glycerol kinase pathway; glycerone phosphate from sn-glycerol 3-phosphate (anaerobic route): step 1/1. With respect to regulation, calcium-binding enhance the activity of the enzyme. Calcium-responsive mitochondrial glycerol-3-phosphate dehydrogenase which seems to be a key component of the pancreatic beta-cell glucose-sensing device. In Mus musculus (Mouse), this protein is Glycerol-3-phosphate dehydrogenase, mitochondrial.